The primary structure comprises 186 residues: Large ribosomal subunit protein uL5m (186 aa).

This sequence belongs to the universal ribosomal protein uL5 family.

It is found in the mitochondrion. The polypeptide is Large ribosomal subunit protein uL5m (RPL5) (Solanum tuberosum (Potato)).